The chain runs to 312 residues: DNA-directed RNA polymerase subunit alpha (312 aa).

Residues 1–226 (MIEFKKPNIT…EHFKAFESAD (226 aa)) are alpha N-terminal domain (alpha-NTD). Residues 243 to 312 (KEKKLEMTIE…DLGLSLRQED (70 aa)) form an alpha C-terminal domain (alpha-CTD) region.

Belongs to the RNA polymerase alpha chain family. In terms of assembly, homodimer. The RNAP catalytic core consists of 2 alpha, 1 beta, 1 beta' and 1 omega subunit. When a sigma factor is associated with the core the holoenzyme is formed, which can initiate transcription.

It catalyses the reaction RNA(n) + a ribonucleoside 5'-triphosphate = RNA(n+1) + diphosphate. Its function is as follows. DNA-dependent RNA polymerase catalyzes the transcription of DNA into RNA using the four ribonucleoside triphosphates as substrates. In Lactobacillus delbrueckii subsp. bulgaricus (strain ATCC BAA-365 / Lb-18), this protein is DNA-directed RNA polymerase subunit alpha.